A 418-amino-acid chain; its full sequence is Chromo domain-containing protein rhino (418 aa).

The Chromo domain maps to 24–74; that stretch reads YVVEKILGKRFVNGRPQVLVKWSGFPNENNTWEPLENVGNCMKLVSDFESE. Composition is skewed to low complexity over residues 84–99 and 107–120; these read AKSVGKSKSSPSSSGP and SSSKKTQQHSKSVQ. 2 disordered regions span residues 84-167 and 199-337; these read AKSV…TDST and PTKD…RCPR. Positions 131-143 are enriched in basic residues; the sequence is NQKKGKNIKKTAG. The segment covering 152-167 has biased composition (polar residues); sequence PKTQMPSTSQVSTDST. Residues 218–228 show a composition bias toward basic and acidic residues; the sequence is RLIEFPQREDA. Low complexity predominate over residues 258–275; it reads GESSSSMSLPTVSSTSSE. Positions 276–285 are enriched in basic and acidic residues; that stretch reads KSIKVTKSEP. Positions 353 to 418 are required for interaction with del/deadlock; that stretch reads TKPFGVNRGL…FESLRIIVPK (66 aa).

In terms of assembly, homodimer in solution. Dimerization is essential for chromatin binding. Component of the Rhino-Deadlock-Cutoff (RDC) complex, composed of rhi/rhino, del/deadlock and cuff/cutoff. Interacts (via C-terminus) with del/deadlock (via N-terminus); this interaction is direct. Two copies of del/deadlock associate with each rhi/rhino dimer. Interacts with cuff/cutoff; this interaction is indirect and is mediated by del/deadlock. Interacts (via Chromo domain) with kipf/kipferl (via C2H2 type zinc finger 4). Interacts (via Chromo domain) with His3/histone H3 (via N-terminus di- or tri-methylated on 'Lys-10' (H3K9me2/3)); this interaction is direct. Two His3 N-terminal tails oriented anti-parallel to each other are required for dimer binding to His3. As to expression, female specific, expressed in both somatic and germline cells but highly enriched in ovaries. In the germarium of the developing oocyte expressed in germline stem cells, cystoblasts and developing germline cysts. Expressed in nurse cells in the germarium and egg chamber.

It is found in the nucleus. The protein resides in the chromosome. Involved in piRNA (piwi-interacting RNA)-mediated transposon repression. May be involved in formation of the perinuclear nuage, a subcellular structure implicated in RNA processing that may be involved in transposon RNA surveillance and silencing. Required for ping-pong amplification during piRNA biogenesis, probably by promoting transcription of piRNA precursors. As part of the Rhino-Deadlock-Cutoff (RDC) Complex associates with, and drives non-canonical transcription of germline specific dual-strand piRNA clusters 80F, 38C and 42AB, but not single-stranded piRNA cluster 20A. Induction of piRNA expression is potentially achieved through a mechanism that prevents transcriptional termination and leads to readthrough from flanking transcription units. Recruited to specific chromatin regions by a combination of H3K9me2/3 histone methylation and differentially expressed sequence-specific recruitment factors. This association may involve direct interaction with DNA. Associates with chromatin upon exposure to homologous piRNA and facilitates transcriptional read-through. As part of the RDC complex, involved in suppression of splicing. In ovaries, recruitment to specific heterochromatin clusters is nucleated and stabilized by kipf/kipferl. During oogenesis, involved in axis specification and may regulate chromosome condensation at the onset of a mitotic-like phase that occurs during nurse cell chromosome duplication. Involved in the distribution of mRNAs for proteins that play a role in anterior-posterior and dorsal-ventral axes specification during development of the oocyte, including grk/gurken, osk/oskar and vas/vasa. Mitigates meiotic double strand breaks and interacts with DNA damage signaling to mediate axis specification. In Drosophila melanogaster (Fruit fly), this protein is Chromo domain-containing protein rhino.